Reading from the N-terminus, the 210-residue chain is Claudin-4 (210 aa).

The Cytoplasmic segment spans residues 1-7 (MASMGLQ). The segment at 1-103 (MASMGLQVLG…GMLLSVVGGK (103 aa)) is interaction with EPHA2. A helical membrane pass occupies residues 8 to 28 (VLGISLAVLGWLGIILSCALP). The Extracellular segment spans residues 29-81 (MWRVTAFIGSNIVTAQTSWEGLWMNCVVQSTGQMQCKMYDSMLALPQDLQAAR). Cysteine 54 and cysteine 64 are oxidised to a cystine. Residues 82–102 (ALMVISIIVGALGMLLSVVGG) traverse the membrane as a helical segment. Topologically, residues 103–116 (KCTNCMEDETVKAK) are cytoplasmic. The chain crosses the membrane as a helical span at residues 117 to 137 (IMITAGAVFIVASMLIMVPVS). Residues 138-160 (WTAHNVIRDFYNPMVASGQKREM) lie on the Extracellular side of the membrane. Residues 161–181 (GASLYVGWAASGLLLLGGGLL) form a helical membrane-spanning segment. At 182–210 (CCSCPPRSNDKPYSAKYSAARSVPASNYV) the chain is on the cytoplasmic side. Phosphotyrosine; by EPHA2 is present on tyrosine 209. The tract at residues 209 to 210 (YV) is interactions with TJP1, TJP2 and TJP3.

The protein belongs to the claudin family. In terms of assembly, can form heteropolymeric strands with other claudins. Interacts with CLDN8. Interacts with CLDN1. Directly interacts with TJP1/ZO-1, TJP2/ZO-2 and TJP3/ZO-3. Interacts with EPHA2; phosphorylates CLDN4 and may regulate tight junctions. Post-translationally, phosphorylated. Phosphorylation by EPHA2 is stimulated by EFNA1 and alters interaction with TJP1. As to expression, expressed primarily in lung and kidney. Present in both cortical and medullar collecting ducts (at protein level).

It is found in the cell junction. The protein resides in the tight junction. Its subcellular location is the cell membrane. The enzyme catalyses chloride(in) = chloride(out). It carries out the reaction bromide(in) = bromide(out). It catalyses the reaction iodide(out) = iodide(in). The catalysed reaction is fluoride(in) = fluoride(out). Can associate with other claudins to regulate tight junction structural and functional strand dynamics. May coassemble with CLDN8 into tight junction strands containing anion-selective channels that convey paracellular chloride permeability in renal collecting ducts. May integrate into CLDN3 strands to modulate localized tight junction barrier properties. May disrupt strand assembly of channel-forming CLDN2 and CLDN15 and inhibit cation conductance. Cannot form tight junction strands on its own. This is Claudin-4 from Mus musculus (Mouse).